Reading from the N-terminus, the 334-residue chain is Thioredoxin reductase aclT (334 aa).

FAD is bound by residues 16–19 (GGPA), 38–43 (NASIDR), I93, A122, D294, and 302–303 (TL).

Belongs to the class-II pyridine nucleotide-disulfide oxidoreductase family. Homodimer. Requires FAD as cofactor.

Its pathway is mycotoxin biosynthesis. In terms of biological role, thioredoxin reductase; part of the gene cluster that mediates the biosynthesis of aspirochlorine (or antibiotic A30641), an unusual halogenated spiro compound with distinctive antifungal properties due to selective inhibition of protein biosynthesis, and which is also active against bacteria, viruses, and murine tumor cells. The non-ribosomal peptide synthetase (NRPS) aclP is responsible the formation of the diketopiperazine (DKP) core from the condensation of 2 phenylalanine residues. One Phe residue is tailored into chlorotyrosine by hydroxylation and chlorination, whereas the second Phe undergoes an unprecedented C-C bond cleavage to be converted into glycine. After formation of the DKP, sulfur is incorporated into the DKP by conjugation with glutathione by aclG, followed by its stepwise degradation to the thiol by aclI, aclJ and aclK, and the dithiol oxidation by aclT. In addition, oxygenases (aclB, aclC, aclL and aclO) and O-methyltransferases (aclM and aclU) act as tailoring enzymes to produce the intermediate dechloroaspirochlorine. Ultimately, chlorination of dechloroaspirochlorine by the halogenase aclH is the last step in the aspirochlorine pathway. This Aspergillus oryzae (strain ATCC 42149 / RIB 40) (Yellow koji mold) protein is Thioredoxin reductase aclT.